Reading from the N-terminus, the 287-residue chain is ATP synthase gamma chain (287 aa).

Belongs to the ATPase gamma chain family. In terms of assembly, F-type ATPases have 2 components, CF(1) - the catalytic core - and CF(0) - the membrane proton channel. CF(1) has five subunits: alpha(3), beta(3), gamma(1), delta(1), epsilon(1). CF(0) has three main subunits: a, b and c.

The protein resides in the cell inner membrane. Produces ATP from ADP in the presence of a proton gradient across the membrane. The gamma chain is believed to be important in regulating ATPase activity and the flow of protons through the CF(0) complex. This is ATP synthase gamma chain from Escherichia coli (strain 55989 / EAEC).